Here is a 2157-residue protein sequence, read N- to C-terminus: Polyketide synthase 2 (2157 aa).

The tract at residues 7–244 is N-terminal acylcarrier protein transacylase domain (SAT); that stretch reads FIFGDQTGGF…IPIPIWAPYH (238 aa). Residues 374 to 807 enclose the Ketosynthase family 3 (KS3) domain; the sequence is DAKIAIIGMS…GGNSALLLED (434 aa). Catalysis depends on for beta-ketoacyl synthase activity residues cysteine 546, histidine 681, and histidine 723. Residues 908-1213 are malonyl-CoA:ACP transacylase (MAT) domain; sequence GFVFSGQGAQ…ASLHRKDDGW (306 aa). Catalysis depends on serine 998, which acts as the For acyl/malonyl transferase activity. Residues 1290–1605 are product template (PT) domain; the sequence is TSSVQKIIQQ…RSLLNKVLPP (316 aa). The interval 1294–1428 is N-terminal hotdog fold; sequence QKIIQQTDGP…CLLCFADPNS (135 aa). One can recognise a PKS/mFAS DH domain in the interval 1294 to 1600; the sequence is QKIIQQTDGP…FLGMSRSLLN (307 aa). Histidine 1327 functions as the Proton acceptor; for dehydratase activity in the catalytic mechanism. The tract at residues 1455 to 1600 is C-terminal hotdog fold; that stretch reads TDSLLSKGIV…FLGMSRSLLN (146 aa). The active-site Proton donor; for dehydratase activity is aspartate 1514. The segment at 1629–1653 is disordered; sequence AKDTERRPLDIPTRAQRQPNSPPTG. One can recognise a Carrier 1 domain in the interval 1649-1726; the sequence is SPPTGTLGRI…ELKEFLGADQ (78 aa). Serine 1686 bears the O-(pantetheine 4'-phosphoryl)serine mark. Residues 1729–1765 are disordered; sequence DDAVACESSNGQHTPQTSDKGSGTLAAQKPDDDTGSD. Residues 1735 to 1749 show a composition bias toward polar residues; it reads ESSNGQHTPQTSDKG. Positions 1765–1839 constitute a Carrier 2 domain; the sequence is DTTLHRVCAI…SLQKALCGTE (75 aa). Serine 1799 bears the O-(pantetheine 4'-phosphoryl)serine mark. The segment at 1875–2151 is thioesterase (TE) domain; the sequence is ASPPHATSIL…MAEMGDLIGE (277 aa). The active-site For thioesterase activity is the serine 1981.

Its function is as follows. Polyketide synthase; part of the Pks2 gene cluster that mediates the formation of infectious structures (appressoria), enabling these fungi to kill insects faster. The product of the Pks2 gene cluster is different from the one of Pks1 and has still not been identified. This Metarhizium guizhouense (strain ARSEF 977) protein is Polyketide synthase 2.